The primary structure comprises 382 residues: 6-hydroxynicotinate 3-monooxygenase (382 aa).

An N-terminal signal peptide occupies residues 1-25 (MRGRQKIAIVGAGLGGAAAATLLQQ). Residues G15, 34-35 (EQ), H47, R108, and L130 contribute to the FAD site. H47 functions as the Proton acceptor in the catalytic mechanism. Residue Y215 is the Proton acceptor of the active site. Residues D294 and 307 to 308 (AC) each bind FAD.

The protein belongs to the 6-hydroxynicotinate 3-monooxygenase family. Monomer. FAD is required as a cofactor.

The catalysed reaction is 6-hydroxynicotinate + NADH + O2 + 2 H(+) = 2,5-dihydroxypyridine + CO2 + NAD(+) + H2O. It participates in cofactor degradation; nicotinate degradation. Its function is as follows. Flavin-dependent monooxygenase (FMO) that catalyzes the decarboxylative hydroxylation of 6-hydroxynicotinic acid (6-HNA) to 2,5-dihydroxypyridine (2,5-DHP) with concomitant oxidation of NADH, a step in the aerobic nicotinate degradation pathway. This chain is 6-hydroxynicotinate 3-monooxygenase, found in Pseudomonas putida (strain ATCC 47054 / DSM 6125 / CFBP 8728 / NCIMB 11950 / KT2440).